The following is a 423-amino-acid chain: Gamma-glutamyl phosphate reductase (423 aa).

The protein belongs to the gamma-glutamyl phosphate reductase family.

The protein localises to the cytoplasm. The catalysed reaction is L-glutamate 5-semialdehyde + phosphate + NADP(+) = L-glutamyl 5-phosphate + NADPH + H(+). It participates in amino-acid biosynthesis; L-proline biosynthesis; L-glutamate 5-semialdehyde from L-glutamate: step 2/2. Its function is as follows. Catalyzes the NADPH-dependent reduction of L-glutamate 5-phosphate into L-glutamate 5-semialdehyde and phosphate. The product spontaneously undergoes cyclization to form 1-pyrroline-5-carboxylate. The protein is Gamma-glutamyl phosphate reductase of Brucella suis (strain ATCC 23445 / NCTC 10510).